Consider the following 229-residue polypeptide: Cytochrome c oxidase subunit 2 (229 aa).

Over Met1–Tyr26 the chain is Mitochondrial intermembrane. The helical transmembrane segment at Thr27–Ser48 threads the bilayer. At Ser49–Glu62 the chain is on the mitochondrial matrix side. The chain crosses the membrane as a helical span at residues Thr63 to Gln82. The Mitochondrial intermembrane portion of the chain corresponds to Leu83–Glu229. 6 residues coordinate Cu cation: His161, Cys196, Glu198, Cys200, His204, and Met207. Position 198 (Glu198) interacts with Mg(2+).

The protein belongs to the cytochrome c oxidase subunit 2 family. Component of the cytochrome c oxidase (complex IV, CIV), a multisubunit enzyme composed of a catalytic core of 3 subunits and several supernumerary subunits. The complex exists as a monomer or a dimer and forms supercomplexes (SCs) in the inner mitochondrial membrane with ubiquinol-cytochrome c oxidoreductase (cytochrome b-c1 complex, complex III, CIII). The cofactor is Cu cation.

It localises to the mitochondrion inner membrane. It carries out the reaction 4 Fe(II)-[cytochrome c] + O2 + 8 H(+)(in) = 4 Fe(III)-[cytochrome c] + 2 H2O + 4 H(+)(out). In terms of biological role, component of the cytochrome c oxidase, the last enzyme in the mitochondrial electron transport chain which drives oxidative phosphorylation. The respiratory chain contains 3 multisubunit complexes succinate dehydrogenase (complex II, CII), ubiquinol-cytochrome c oxidoreductase (cytochrome b-c1 complex, complex III, CIII) and cytochrome c oxidase (complex IV, CIV), that cooperate to transfer electrons derived from NADH and succinate to molecular oxygen, creating an electrochemical gradient over the inner membrane that drives transmembrane transport and the ATP synthase. Cytochrome c oxidase is the component of the respiratory chain that catalyzes the reduction of oxygen to water. Electrons originating from reduced cytochrome c in the intermembrane space (IMS) are transferred via the dinuclear copper A center (CU(A)) of subunit 2 and heme A of subunit 1 to the active site in subunit 1, a binuclear center (BNC) formed by heme A3 and copper B (CU(B)). The BNC reduces molecular oxygen to 2 water molecules using 4 electrons from cytochrome c in the IMS and 4 protons from the mitochondrial matrix. This chain is Cytochrome c oxidase subunit 2 (COII), found in Patiria pectinifera (Starfish).